The sequence spans 117 residues: Large ribosomal subunit protein bL19 (117 aa).

Belongs to the bacterial ribosomal protein bL19 family.

Functionally, this protein is located at the 30S-50S ribosomal subunit interface and may play a role in the structure and function of the aminoacyl-tRNA binding site. In Shewanella woodyi (strain ATCC 51908 / MS32), this protein is Large ribosomal subunit protein bL19.